Here is a 176-residue protein sequence, read N- to C-terminus: MFPMVTGFMNYGQQTVRAARYIGQSFMTTLSHVNRLPVTIQYPYEKLITSERFRGRIHFEFDKCIACEVCVRVCPIDLPVVDWELETNIRKKRLLNYSIDFGICIFCGNCVEYCPTNCLSMTEEYELSTYNRHELNYNQIALGRLPMSVIDDYTIRTILNSPQSLIKMVKPPLIKD.

4Fe-4S ferredoxin-type domains are found at residues 55 to 84 (GRIH…VDWE) and 95 to 124 (LNYS…MTEE). Cys-64, Cys-67, Cys-70, Cys-74, Cys-104, Cys-107, Cys-110, and Cys-114 together coordinate [4Fe-4S] cluster.

This sequence belongs to the complex I 23 kDa subunit family. As to quaternary structure, NDH is composed of at least 16 different subunits, 5 of which are encoded in the nucleus. The cofactor is [4Fe-4S] cluster.

Its subcellular location is the plastid. The protein resides in the chloroplast thylakoid membrane. The enzyme catalyses a plastoquinone + NADH + (n+1) H(+)(in) = a plastoquinol + NAD(+) + n H(+)(out). It catalyses the reaction a plastoquinone + NADPH + (n+1) H(+)(in) = a plastoquinol + NADP(+) + n H(+)(out). Its function is as follows. NDH shuttles electrons from NAD(P)H:plastoquinone, via FMN and iron-sulfur (Fe-S) centers, to quinones in the photosynthetic chain and possibly in a chloroplast respiratory chain. The immediate electron acceptor for the enzyme in this species is believed to be plastoquinone. Couples the redox reaction to proton translocation, and thus conserves the redox energy in a proton gradient. This chain is NAD(P)H-quinone oxidoreductase subunit I, chloroplastic, found in Populus trichocarpa (Western balsam poplar).